Reading from the N-terminus, the 156-residue chain is MSINATLLGQAISFLLFVWFCMKFVWPPLMNAIEERQKKIADGLADAGRAAKDLELAQVKATEQLKDAKATANEIIEQANKRKAQIVDEAKVEADTERAKIIAQGHAEIENERNRVKEDLRKQVAALAIAGAEKILERSIDEAAHSDIVNKLVAEL.

A helical membrane pass occupies residues 7-29; sequence LLGQAISFLLFVWFCMKFVWPPL.

Belongs to the ATPase B chain family. As to quaternary structure, F-type ATPases have 2 components, F(1) - the catalytic core - and F(0) - the membrane proton channel. F(1) has five subunits: alpha(3), beta(3), gamma(1), delta(1), epsilon(1). F(0) has three main subunits: a(1), b(2) and c(10-14). The alpha and beta chains form an alternating ring which encloses part of the gamma chain. F(1) is attached to F(0) by a central stalk formed by the gamma and epsilon chains, while a peripheral stalk is formed by the delta and b chains.

The protein resides in the cell inner membrane. Functionally, f(1)F(0) ATP synthase produces ATP from ADP in the presence of a proton or sodium gradient. F-type ATPases consist of two structural domains, F(1) containing the extramembraneous catalytic core and F(0) containing the membrane proton channel, linked together by a central stalk and a peripheral stalk. During catalysis, ATP synthesis in the catalytic domain of F(1) is coupled via a rotary mechanism of the central stalk subunits to proton translocation. Its function is as follows. Component of the F(0) channel, it forms part of the peripheral stalk, linking F(1) to F(0). The sequence is that of ATP synthase subunit b from Shewanella halifaxensis (strain HAW-EB4).